The primary structure comprises 621 residues: Chaperone protein HscA homolog (621 aa).

It belongs to the heat shock protein 70 family.

Functionally, chaperone involved in the maturation of iron-sulfur cluster-containing proteins. Has a low intrinsic ATPase activity which is markedly stimulated by HscB. In Cupriavidus pinatubonensis (strain JMP 134 / LMG 1197) (Cupriavidus necator (strain JMP 134)), this protein is Chaperone protein HscA homolog.